Reading from the N-terminus, the 361-residue chain is Probable sugar phosphate/phosphate translocator At1g12500 (361 aa).

At valine 2 the chain carries N-acetylvaline. A run of 9 helical transmembrane segments spans residues 56-76, 90-110, 125-145, 153-173, 192-212, 240-260, 276-296, 306-326, and 329-349; these read TILT…VLLL, IFLT…VINI, FLKI…GNTS, FNQA…FLIT, IVLA…ICVA, LLLY…LYIE, LIIF…LTNF, TLQV…VLIF, and PVTV…VLYS. One can recognise an EamA domain in the interval 89–196; the sequence is PIFLTMTHML…PVVSGIVLAS (108 aa).

It belongs to the TPT transporter family. TPT (TC 2.A.7.9) subfamily.

Its subcellular location is the membrane. The polypeptide is Probable sugar phosphate/phosphate translocator At1g12500 (Arabidopsis thaliana (Mouse-ear cress)).